Reading from the N-terminus, the 126-residue chain is Profilin-1B (126 aa).

The interval 2-36 (SWQTYVDTNLVGTGAVTQAAILGLDGNTWATSAGF) is actin binding. Lys104 is subject to N6,N6,N6-trimethyllysine.

The protein belongs to the profilin family. Occurs in many kinds of cells as a complex with monomeric actin in a 1:1 ratio.

The protein localises to the cytoplasm. It is found in the cytoskeleton. In terms of biological role, binds to actin and affects the structure of the cytoskeleton. At high concentrations, profilin prevents the polymerization of actin, whereas it enhances it at low concentrations. By binding to PIP2, it inhibits the formation of IP3 and DG. This chain is Profilin-1B, found in Acanthamoeba castellanii (Amoeba).